The primary structure comprises 307 residues: UDP-3-O-acyl-N-acetylglucosamine deacetylase (307 aa).

The Zn(2+) site is built by His-78, His-235, and Asp-239. Residue His-262 is the Proton donor of the active site.

The protein belongs to the LpxC family. It depends on Zn(2+) as a cofactor.

It carries out the reaction a UDP-3-O-[(3R)-3-hydroxyacyl]-N-acetyl-alpha-D-glucosamine + H2O = a UDP-3-O-[(3R)-3-hydroxyacyl]-alpha-D-glucosamine + acetate. It participates in glycolipid biosynthesis; lipid IV(A) biosynthesis; lipid IV(A) from (3R)-3-hydroxytetradecanoyl-[acyl-carrier-protein] and UDP-N-acetyl-alpha-D-glucosamine: step 2/6. In terms of biological role, catalyzes the hydrolysis of UDP-3-O-myristoyl-N-acetylglucosamine to form UDP-3-O-myristoylglucosamine and acetate, the committed step in lipid A biosynthesis. The sequence is that of UDP-3-O-acyl-N-acetylglucosamine deacetylase from Geotalea uraniireducens (strain Rf4) (Geobacter uraniireducens).